Reading from the N-terminus, the 693-residue chain is Methionine--tRNA ligase (693 aa).

The short motif at 12-22 (PYANGPLHLGH) is the 'HIGH' region element. Residues Cys143, Cys146, Cys156, and Cys159 each coordinate Zn(2+). A 'KMSKS' region motif is present at residues 330 to 334 (KMSKS). Residue Lys333 participates in ATP binding. The tract at residues 557-576 (APTAKNEAAKPAAPAAAKTE) is disordered. In terms of domain architecture, tRNA-binding spans 590–693 (DFAKLDLRIG…SGAQPGMPVR (104 aa)).

Belongs to the class-I aminoacyl-tRNA synthetase family. MetG type 1 subfamily. In terms of assembly, homodimer. Zn(2+) serves as cofactor.

The protein localises to the cytoplasm. It carries out the reaction tRNA(Met) + L-methionine + ATP = L-methionyl-tRNA(Met) + AMP + diphosphate. In terms of biological role, is required not only for elongation of protein synthesis but also for the initiation of all mRNA translation through initiator tRNA(fMet) aminoacylation. The polypeptide is Methionine--tRNA ligase (Stenotrophomonas maltophilia (strain R551-3)).